The sequence spans 426 residues: Enolase (426 aa).

Glycine 41 provides a ligand contact to phosphoenolpyruvate. Serine 43 contributes to the Mg(2+) binding site. Position 165 (glutamate 165) interacts with phosphoenolpyruvate. (2R)-2-phosphoglycerate is bound by residues glutamate 165 and glutamate 206. Glutamate 206 acts as the Proton donor in catalysis. The Mg(2+) site is built by aspartate 243, glutamate 286, and aspartate 313. The phosphoenolpyruvate site is built by aspartate 313, lysine 338, arginine 367, serine 368, and lysine 389. Positions 338, 367, and 368 each coordinate (2R)-2-phosphoglycerate. Lysine 338 acts as the Proton acceptor in catalysis.

This sequence belongs to the enolase family. In terms of assembly, homodimer. Mg(2+) is required as a cofactor.

Its subcellular location is the cytoplasm. The protein localises to the secreted. It localises to the cell surface. It carries out the reaction (2R)-2-phosphoglycerate = phosphoenolpyruvate + H2O. It participates in carbohydrate degradation; glycolysis; pyruvate from D-glyceraldehyde 3-phosphate: step 4/5. Functionally, catalyzes the reversible conversion of 2-phosphoglycerate (2-PG) into phosphoenolpyruvate (PEP). It is essential for the degradation of carbohydrates via glycolysis. This Chloroflexus aurantiacus (strain ATCC 29366 / DSM 635 / J-10-fl) protein is Enolase.